The primary structure comprises 159 residues: Ribosome maturation factor RimP (159 aa).

This sequence belongs to the RimP family.

It localises to the cytoplasm. In terms of biological role, required for maturation of 30S ribosomal subunits. This Streptococcus pneumoniae serotype 2 (strain D39 / NCTC 7466) protein is Ribosome maturation factor RimP.